The following is a 625-amino-acid chain: E3 ubiquitin-protein ligase synoviolin (625 aa).

The Cytoplasmic segment spans residues 1–4 (MVRA). The helical transmembrane segment at 5–25 (ALVTATSLALTGAVVAHAYFL) threads the bilayer. Residues 26-40 (KHQFYPTVVYLTKSS) lie on the Lumenal side of the membrane. Residues 41 to 61 (PSMAVLYIQAFVLVFLLGKLM) traverse the membrane as a helical segment. At 62–98 (RKVFFGQLRAAEMEHLIERSWYAVTETCLAFTVFRDD) the chain is on the cytoplasmic side. Residues 99–119 (FSPRFVALFTLLLFLKCFHWL) traverse the membrane as a helical segment. Residues 120–135 (AEDRVDFMERSPNISW) are Lumenal-facing. A helical membrane pass occupies residues 136–156 (VFHFRVLSLMVLLGVMDFLFV). Residues 157 to 169 (NHACHSIITRGAS) lie on the Cytoplasmic side of the membrane. Residues 170–190 (VQLVFGFEYAILMTMVLTTFI) form a helical membrane-spanning segment. Topologically, residues 191 to 212 (KYTLHTIDLQSENPWDNKAVYM) are lumenal. The helical transmembrane segment at 213-235 (LYTELFTGFIKVLLYMAFMTIMI) threads the bilayer. Positions 236 to 270 (KVHTFPLFAIRPMYLAMRQFKKAVTDAIMSRRAIR) are interaction with p53/TP53. The Cytoplasmic portion of the chain corresponds to 236-625 (KVHTFPLFAI…GNLLKLASVN (390 aa)). Positions 291, 294, 307, 309, 312, 315, 326, and 329 each coordinate Zn(2+). The RING-type; atypical zinc finger occupies 291-330 (CIICREEMVTGAKKLPCNHIFHSSCLRSWFQRQQTCPTCR). 4 disordered regions span residues 337–361 (SQPNQTPAPPAAQAPAPPAPANAPI), 390–434 (PPPA…SAAP), 462–487 (FMSSMPPPPSSLSSMSEAELRELEQE), and 523–625 (LSPP…ASVN). Positions 342 to 361 (TPAPPAAQAPAPPAPANAPI) are enriched in pro residues. A compositionally biased stretch (low complexity) spans 423–434 (AQSTAEAASAAP). Pro residues predominate over residues 462-471 (FMSSMPPPPS). The span at 523-564 (LSPPRSETNTGETSESANVESSPSTANTETAGQEIQSQSGES) shows a compositional bias: polar residues.

This sequence belongs to the HRD1 family. As to quaternary structure, homodimer.

It localises to the endoplasmic reticulum membrane. The enzyme catalyses S-ubiquitinyl-[E2 ubiquitin-conjugating enzyme]-L-cysteine + [acceptor protein]-L-lysine = [E2 ubiquitin-conjugating enzyme]-L-cysteine + N(6)-ubiquitinyl-[acceptor protein]-L-lysine.. The protein operates within protein modification; protein ubiquitination. Its function is as follows. E3 ubiquitin-protein ligase which accepts ubiquitin specifically from endoplasmic reticulum-associated UBC7 E2 ligase and transfers it to substrates, promoting their degradation. Component of the endoplasmic reticulum quality control (ERQC) system also called ER-associated degradation (ERAD) involved in ubiquitin-dependent degradation of misfolded endoplasmic reticulum proteins. Also promotes the degradation of normal but naturally short-lived proteins. Protects cells from ER stress-induced apoptosis. Sequesters p53 in the cytoplasm and promotes its degradation, thereby negatively regulating its biological function in transcription, cell cycle regulation and apoptosis. In Danio rerio (Zebrafish), this protein is E3 ubiquitin-protein ligase synoviolin (syvn1).